We begin with the raw amino-acid sequence, 471 residues long: Putative multidrug resistance protein MdtD (471 aa).

Helical transmembrane passes span 12 to 32, 49 to 69, 77 to 97, 106 to 126, 138 to 158, 165 to 185, 195 to 215, 220 to 240, 263 to 283, 286 to 306, 342 to 362, 393 to 413, and 431 to 451; these read LWIVAFGFFMQSLDTTIVNTA, MIIVSYVLTVAVMLPASGWLA, IFFTAIVLFTAGSLFCAQAST, VLQGIGGAMMVPVGRLTVMKI, FVTLPGQVGPLLGPALGGVLV, WIFLINIPVGIVGAIATLCLM, FDLSGFLLLAAGMATLTLALD, LGISSRWLAGLVAVGLAALLL, FSLGLGGSFAGRIGSGMLPFM, VFLQIGLGFSPFHAGLMMIPM, LLFMFSALAGWYYALPLVLFL, LLSMVMQLSMSIGVTIAGLLL, and VFLYTYLSMAAIIALPALIFS.

It belongs to the major facilitator superfamily. TCR/Tet family.

The protein localises to the cell inner membrane. This chain is Putative multidrug resistance protein MdtD, found in Klebsiella pneumoniae (strain 342).